A 396-amino-acid polypeptide reads, in one-letter code: Elongation factor Tu (396 aa).

Residues 10-206 (KPHVNIGTIG…AVDEYIPDPV (197 aa)) enclose the tr-type G domain. The segment at 19–26 (GHVDHGKT) is G1. 19 to 26 (GHVDHGKT) contacts GTP. Threonine 26 is a binding site for Mg(2+). The segment at 62-66 (GITIN) is G2. Residues 83–86 (DAPG) are G3. GTP-binding positions include 83–87 (DAPGH) and 138–141 (NKSD). Residues 138 to 141 (NKSD) are G4. The segment at 176–178 (SGL) is G5.

Belongs to the TRAFAC class translation factor GTPase superfamily. Classic translation factor GTPase family. EF-Tu/EF-1A subfamily. As to quaternary structure, monomer.

It is found in the cytoplasm. It catalyses the reaction GTP + H2O = GDP + phosphate + H(+). In terms of biological role, GTP hydrolase that promotes the GTP-dependent binding of aminoacyl-tRNA to the A-site of ribosomes during protein biosynthesis. The sequence is that of Elongation factor Tu from Micrococcus luteus (strain ATCC 4698 / DSM 20030 / JCM 1464 / CCM 169 / CCUG 5858 / IAM 1056 / NBRC 3333 / NCIMB 9278 / NCTC 2665 / VKM Ac-2230) (Micrococcus lysodeikticus).